The primary structure comprises 364 residues: UDP-N-acetylglucosamine--N-acetylmuramyl-(pentapeptide) pyrophosphoryl-undecaprenol N-acetylglucosamine transferase (364 aa).

Residues 10–12, Asn-124, Arg-165, Ser-193, Ile-248, and Gln-293 contribute to the UDP-N-acetyl-alpha-D-glucosamine site; that span reads TGG.

It belongs to the glycosyltransferase 28 family. MurG subfamily.

The protein resides in the cell inner membrane. It catalyses the reaction di-trans,octa-cis-undecaprenyl diphospho-N-acetyl-alpha-D-muramoyl-L-alanyl-D-glutamyl-meso-2,6-diaminopimeloyl-D-alanyl-D-alanine + UDP-N-acetyl-alpha-D-glucosamine = di-trans,octa-cis-undecaprenyl diphospho-[N-acetyl-alpha-D-glucosaminyl-(1-&gt;4)]-N-acetyl-alpha-D-muramoyl-L-alanyl-D-glutamyl-meso-2,6-diaminopimeloyl-D-alanyl-D-alanine + UDP + H(+). Its pathway is cell wall biogenesis; peptidoglycan biosynthesis. Its function is as follows. Cell wall formation. Catalyzes the transfer of a GlcNAc subunit on undecaprenyl-pyrophosphoryl-MurNAc-pentapeptide (lipid intermediate I) to form undecaprenyl-pyrophosphoryl-MurNAc-(pentapeptide)GlcNAc (lipid intermediate II). The polypeptide is UDP-N-acetylglucosamine--N-acetylmuramyl-(pentapeptide) pyrophosphoryl-undecaprenol N-acetylglucosamine transferase (Geobacter sulfurreducens (strain ATCC 51573 / DSM 12127 / PCA)).